Consider the following 264-residue polypeptide: uncharacterized protein (264 aa).

Positions 5, 7, 93, 134, 158, and 208 each coordinate a divalent metal cation.

This sequence belongs to the metallo-dependent hydrolases superfamily. TatD-type hydrolase family. Requires a divalent metal cation as cofactor.

This is an uncharacterized protein from Mycobacterium tuberculosis (strain ATCC 25618 / H37Rv).